The chain runs to 540 residues: MCRAVAGVTRFVFTLALGVGSAHVTHAMKKKTSVSEQPEQRTYEVRTFGCQMNVHDSERLSGLLEDSGYQPAANGEEPDVLVFNTCAVRENADNRLYGTLAMVKPMKDRNPGMQIAVGGCMAQKDKDAVVDRAPWVDVVFGTHNIGSLPTLLERSAHNQRAEVEILDSLEEFPSVLPAKRESAYSGWVSVSVGCNNTCTFCIVPSLRGKEQDRRPGEILAEVQALVDQGVQEVTLLGQNVNAYGVNFADEDLPRDRGAFAKLLRACGEIEGLERLRFTSPHPAEFTDDVIDAMAETPNVCPQLHMPLQSGSDRILKEMRRSYRSKKFLGILDKVRERIPHAAITTDIIVGFPGETEEDFQATLDVVEKARFSCAFTFQYSPRPGTPAATMPDQIPKAVVQERYERLIALQERIQAEDNKELVGTTQELLVQETGGRKDAQRHRMSGRARDGRLVHFTPSEDVRPGDIVEVTITDARPFFLIADGPLVNHRLTKAGDMSGAGQTPTTAPIGVSLGVPTIGIKPQADATAAPKNVHEGCGCD.

One can recognise an MTTase N-terminal domain in the interval 41 to 157 (RTYEVRTFGC…LPTLLERSAH (117 aa)). Residues Cys50, Cys86, Cys120, Cys194, Cys198, and Cys201 each coordinate [4Fe-4S] cluster. Positions 180–416 (RESAYSGWVS…IALQERIQAE (237 aa)) constitute a Radical SAM core domain. The region spanning 419–486 (KELVGTTQEL…PFFLIADGPL (68 aa)) is the TRAM domain.

This sequence belongs to the methylthiotransferase family. MiaB subfamily. In terms of assembly, monomer. Requires [4Fe-4S] cluster as cofactor.

It localises to the cytoplasm. The enzyme catalyses N(6)-dimethylallyladenosine(37) in tRNA + (sulfur carrier)-SH + AH2 + 2 S-adenosyl-L-methionine = 2-methylsulfanyl-N(6)-dimethylallyladenosine(37) in tRNA + (sulfur carrier)-H + 5'-deoxyadenosine + L-methionine + A + S-adenosyl-L-homocysteine + 2 H(+). Catalyzes the methylthiolation of N6-(dimethylallyl)adenosine (i(6)A), leading to the formation of 2-methylthio-N6-(dimethylallyl)adenosine (ms(2)i(6)A) at position 37 in tRNAs that read codons beginning with uridine. The polypeptide is tRNA-2-methylthio-N(6)-dimethylallyladenosine synthase (Corynebacterium urealyticum (strain ATCC 43042 / DSM 7109)).